A 152-amino-acid polypeptide reads, in one-letter code: Membrane-spanning 4-domains subfamily A member 13 (152 aa).

A run of 4 helical transmembrane segments spans residues 1–21 (MIGIFHIFMWYFLLVLYMGQI), 32–52 (TYKTGCTLWGIFFIIAGVFLI), 66–86 (TLIINIICIITTITAVTLTII), and 111–131 (ILLFFYGLEFSIALTHSIYSC).

It belongs to the MS4A family.

It localises to the membrane. In terms of biological role, may be involved in signal transduction as a component of a multimeric receptor complex. This is Membrane-spanning 4-domains subfamily A member 13 (MS4A13) from Homo sapiens (Human).